The primary structure comprises 453 residues: uncharacterized protein (453 aa).

Residues 5–63 (LLKKNQSIELTIEDLTHDGSGVGKIDGYPLFIPNTLPGEKVTAKIIKLNKNYGFARMEN) form the TRAM domain. The [4Fe-4S] cluster site is built by Cys-76, Cys-82, Cys-85, and Cys-162. Residues Gln-285, Tyr-314, Glu-335, and Asp-383 each coordinate S-adenosyl-L-methionine. The active-site Nucleophile is Cys-410.

The protein belongs to the class I-like SAM-binding methyltransferase superfamily. RNA M5U methyltransferase family.

This is an uncharacterized protein from Listeria monocytogenes serotype 4b (strain F2365).